Consider the following 260-residue polypeptide: Phosphate import ATP-binding protein PstB 1 (260 aa).

In terms of domain architecture, ABC transporter spans 13–255 (VRVRDLNLWY…PHTKKAEDYI (243 aa)). 45–52 (GPSGCGKS) is a binding site for ATP.

It belongs to the ABC transporter superfamily. Phosphate importer (TC 3.A.1.7) family. In terms of assembly, the complex is composed of two ATP-binding proteins (PstB), two transmembrane proteins (PstC and PstA) and a solute-binding protein (PstS).

It localises to the cell inner membrane. It carries out the reaction phosphate(out) + ATP + H2O = ADP + 2 phosphate(in) + H(+). In terms of biological role, part of the ABC transporter complex PstSACB involved in phosphate import. Responsible for energy coupling to the transport system. This chain is Phosphate import ATP-binding protein PstB 1, found in Chromohalobacter salexigens (strain ATCC BAA-138 / DSM 3043 / CIP 106854 / NCIMB 13768 / 1H11).